The following is a 307-amino-acid chain: Aspartate carbamoyltransferase catalytic subunit (307 aa).

Carbamoyl phosphate contacts are provided by R59 and T60. K87 lines the L-aspartate pocket. Residues R109, H137, and Q140 each coordinate carbamoyl phosphate. L-aspartate contacts are provided by R170 and R224. Carbamoyl phosphate contacts are provided by G265 and P266.

It belongs to the aspartate/ornithine carbamoyltransferase superfamily. ATCase family. Heterododecamer (2C3:3R2) of six catalytic PyrB chains organized as two trimers (C3), and six regulatory PyrI chains organized as three dimers (R2).

The enzyme catalyses carbamoyl phosphate + L-aspartate = N-carbamoyl-L-aspartate + phosphate + H(+). Its pathway is pyrimidine metabolism; UMP biosynthesis via de novo pathway; (S)-dihydroorotate from bicarbonate: step 2/3. Its function is as follows. Catalyzes the condensation of carbamoyl phosphate and aspartate to form carbamoyl aspartate and inorganic phosphate, the committed step in the de novo pyrimidine nucleotide biosynthesis pathway. In Cytophaga hutchinsonii (strain ATCC 33406 / DSM 1761 / CIP 103989 / NBRC 15051 / NCIMB 9469 / D465), this protein is Aspartate carbamoyltransferase catalytic subunit.